Reading from the N-terminus, the 303-residue chain is N-acetyl-D-glucosamine kinase (303 aa).

ATP contacts are provided by residues 4-11 and 133-140; these read GFDIGGTK and GVGGGLIF. Residues His157, Cys177, Cys179, and Cys184 each contribute to the Zn(2+) site.

Belongs to the ROK (NagC/XylR) family. NagK subfamily.

It carries out the reaction N-acetyl-D-glucosamine + ATP = N-acetyl-D-glucosamine 6-phosphate + ADP + H(+). It participates in cell wall biogenesis; peptidoglycan recycling. Its function is as follows. Catalyzes the phosphorylation of N-acetyl-D-glucosamine (GlcNAc) derived from cell-wall degradation, yielding GlcNAc-6-P. This chain is N-acetyl-D-glucosamine kinase, found in Shigella boydii serotype 4 (strain Sb227).